A 374-amino-acid polypeptide reads, in one-letter code: Chaperone protein DnaJ (374 aa).

One can recognise a J domain in the interval 5–70 (DYYEVLGVER…SKRAAFDQYG (66 aa)). Residues 133–211 (GTTVSIRVPT…CHGEGRVEEY (79 aa)) form a CR-type zinc finger. Residues C146, C149, C163, C166, C185, C188, C199, and C202 each coordinate Zn(2+). CXXCXGXG motif repeat units follow at residues 146–153 (CQPCDGSG), 163–170 (CPTCGGIG), 185–192 (CPRCHGQG), and 199–206 (CTSCHGEG).

It belongs to the DnaJ family. In terms of assembly, homodimer. Requires Zn(2+) as cofactor.

The protein localises to the cytoplasm. Participates actively in the response to hyperosmotic and heat shock by preventing the aggregation of stress-denatured proteins and by disaggregating proteins, also in an autonomous, DnaK-independent fashion. Unfolded proteins bind initially to DnaJ; upon interaction with the DnaJ-bound protein, DnaK hydrolyzes its bound ATP, resulting in the formation of a stable complex. GrpE releases ADP from DnaK; ATP binding to DnaK triggers the release of the substrate protein, thus completing the reaction cycle. Several rounds of ATP-dependent interactions between DnaJ, DnaK and GrpE are required for fully efficient folding. Also involved, together with DnaK and GrpE, in the DNA replication of plasmids through activation of initiation proteins. The sequence is that of Chaperone protein DnaJ from Pseudomonas putida (strain ATCC 700007 / DSM 6899 / JCM 31910 / BCRC 17059 / LMG 24140 / F1).